The sequence spans 372 residues: Queuine tRNA-ribosyltransferase (372 aa).

The active-site Proton acceptor is the D93. Substrate is bound by residues D93 to F97, D147, Q190, and G217. The segment at G248–C254 is RNA binding. D267 serves as the catalytic Nucleophile. The interval T272–R276 is RNA binding; important for wobble base 34 recognition. Positions 305, 307, 310, and 336 each coordinate Zn(2+).

Belongs to the queuine tRNA-ribosyltransferase family. As to quaternary structure, homodimer. Within each dimer, one monomer is responsible for RNA recognition and catalysis, while the other monomer binds to the replacement base PreQ1. Requires Zn(2+) as cofactor.

The catalysed reaction is 7-aminomethyl-7-carbaguanine + guanosine(34) in tRNA = 7-aminomethyl-7-carbaguanosine(34) in tRNA + guanine. It participates in tRNA modification; tRNA-queuosine biosynthesis. In terms of biological role, catalyzes the base-exchange of a guanine (G) residue with the queuine precursor 7-aminomethyl-7-deazaguanine (PreQ1) at position 34 (anticodon wobble position) in tRNAs with GU(N) anticodons (tRNA-Asp, -Asn, -His and -Tyr). Catalysis occurs through a double-displacement mechanism. The nucleophile active site attacks the C1' of nucleotide 34 to detach the guanine base from the RNA, forming a covalent enzyme-RNA intermediate. The proton acceptor active site deprotonates the incoming PreQ1, allowing a nucleophilic attack on the C1' of the ribose to form the product. After dissociation, two additional enzymatic reactions on the tRNA convert PreQ1 to queuine (Q), resulting in the hypermodified nucleoside queuosine (7-(((4,5-cis-dihydroxy-2-cyclopenten-1-yl)amino)methyl)-7-deazaguanosine). This Desulforudis audaxviator (strain MP104C) protein is Queuine tRNA-ribosyltransferase.